The chain runs to 223 residues: Cytidylate kinase (223 aa).

The segment at 1–23 (MSTSPLVIAIDGPSGSGKSSTSR) is disordered. 12-20 (GPSGSGKSS) contributes to the ATP binding site.

The protein belongs to the cytidylate kinase family. Type 1 subfamily.

It is found in the cytoplasm. The catalysed reaction is CMP + ATP = CDP + ADP. The enzyme catalyses dCMP + ATP = dCDP + ADP. The protein is Cytidylate kinase of Cutibacterium acnes (strain DSM 16379 / KPA171202) (Propionibacterium acnes).